The sequence spans 129 residues: Glycine cleavage system H protein (129 aa).

In terms of domain architecture, Lipoyl-binding spans 24–106; sequence LVRVGISAFA…HGEGWLLVVR (83 aa). Position 65 is an N6-lipoyllysine (lysine 65).

This sequence belongs to the GcvH family. The glycine cleavage system is composed of four proteins: P, T, L and H. Requires (R)-lipoate as cofactor.

Functionally, the glycine cleavage system catalyzes the degradation of glycine. The H protein shuttles the methylamine group of glycine from the P protein to the T protein. This chain is Glycine cleavage system H protein, found in Prochlorococcus marinus (strain MIT 9303).